The sequence spans 154 residues: Ribonuclease H (154 aa).

Positions 1–142 (MTKHVEIFTD…CDELARTAAE (142 aa)) constitute an RNase H type-1 domain. Mg(2+) contacts are provided by D10, E48, D70, and D134.

The protein belongs to the RNase H family. As to quaternary structure, monomer. The cofactor is Mg(2+).

It is found in the cytoplasm. The enzyme catalyses Endonucleolytic cleavage to 5'-phosphomonoester.. Endonuclease that specifically degrades the RNA of RNA-DNA hybrids. The sequence is that of Ribonuclease H from Vibrio campbellii (strain ATCC BAA-1116).